The chain runs to 177 residues: FANCD2 opposite strand protein (177 aa).

This chain is FANCD2 opposite strand protein (FANCD2OS), found in Homo sapiens (Human).